The sequence spans 406 residues: Succinylornithine transaminase (406 aa).

N6-(pyridoxal phosphate)lysine is present on Lys252.

Belongs to the class-III pyridoxal-phosphate-dependent aminotransferase family. AstC subfamily. Requires pyridoxal 5'-phosphate as cofactor.

The catalysed reaction is N(2)-succinyl-L-ornithine + 2-oxoglutarate = N-succinyl-L-glutamate 5-semialdehyde + L-glutamate. It functions in the pathway amino-acid degradation; L-arginine degradation via AST pathway; L-glutamate and succinate from L-arginine: step 3/5. Catalyzes the transamination of N(2)-succinylornithine and alpha-ketoglutarate into N(2)-succinylglutamate semialdehyde and glutamate. Can also act as an acetylornithine aminotransferase. This Escherichia coli O139:H28 (strain E24377A / ETEC) protein is Succinylornithine transaminase.